Consider the following 502-residue polypeptide: Arginine-specific demethylase JMJ22 (502 aa).

The disordered stretch occupies residues 15–45 (KSKSKRLKLHQHEPESLFPEKEVEEEDEDEG). A compositionally biased stretch (basic and acidic residues) spans 24–35 (HQHEPESLFPEK). One can recognise an F-box domain in the interval 80–126 (LGNLQILSDELVLDILGLLGANHLGVLATVTKSFYIFANHEPLWRNL). Residues 279 to 439 (EKVPVLDSEY…NVLEFLKKPN (161 aa)) enclose the JmjC domain. Fe cation is bound by residues H324, D326, and H407.

It belongs to the JARID1 histone demethylase family. It depends on Fe(2+) as a cofactor. As to expression, expressed in inflorescences, roots and siliques, and, at low levels, in leaves and stems.

Its subcellular location is the nucleus. The catalysed reaction is N(omega),N(omega)-dimethyl-L-arginyl-[protein] + 2-oxoglutarate + O2 = N(omega)-methyl-L-arginyl-[protein] + formaldehyde + succinate + CO2. Functionally, histone demethylase that demethylates 'Arg-3' (H4R3me) of histone H4 with a specific activity for H4R3me2. Involved in the positive regulation of gene expression. Together with JMJ20, positively regulates seed germination by promoting the removal of repressive histone arginine methylations (e.g. H4R3me2) at GA3ox1 and GA3ox2 to trigger gibberellic acid (GA) biosynthesis. The protein is Arginine-specific demethylase JMJ22 of Arabidopsis thaliana (Mouse-ear cress).